Consider the following 213-residue polypeptide: Thiamine-phosphate synthase (213 aa).

4-amino-2-methyl-5-(diphosphooxymethyl)pyrimidine contacts are provided by residues Q40 to K44 and N75. The Mg(2+) site is built by D76 and D95. S113 contributes to the 4-amino-2-methyl-5-(diphosphooxymethyl)pyrimidine binding site. T139–S141 is a binding site for 2-[(2R,5Z)-2-carboxy-4-methylthiazol-5(2H)-ylidene]ethyl phosphate. K142 is a binding site for 4-amino-2-methyl-5-(diphosphooxymethyl)pyrimidine. 2-[(2R,5Z)-2-carboxy-4-methylthiazol-5(2H)-ylidene]ethyl phosphate is bound by residues G171 and I191–S192.

It belongs to the thiamine-phosphate synthase family. Mg(2+) is required as a cofactor.

The enzyme catalyses 2-[(2R,5Z)-2-carboxy-4-methylthiazol-5(2H)-ylidene]ethyl phosphate + 4-amino-2-methyl-5-(diphosphooxymethyl)pyrimidine + 2 H(+) = thiamine phosphate + CO2 + diphosphate. It carries out the reaction 2-(2-carboxy-4-methylthiazol-5-yl)ethyl phosphate + 4-amino-2-methyl-5-(diphosphooxymethyl)pyrimidine + 2 H(+) = thiamine phosphate + CO2 + diphosphate. It catalyses the reaction 4-methyl-5-(2-phosphooxyethyl)-thiazole + 4-amino-2-methyl-5-(diphosphooxymethyl)pyrimidine + H(+) = thiamine phosphate + diphosphate. It participates in cofactor biosynthesis; thiamine diphosphate biosynthesis; thiamine phosphate from 4-amino-2-methyl-5-diphosphomethylpyrimidine and 4-methyl-5-(2-phosphoethyl)-thiazole: step 1/1. Functionally, condenses 4-methyl-5-(beta-hydroxyethyl)thiazole monophosphate (THZ-P) and 2-methyl-4-amino-5-hydroxymethyl pyrimidine pyrophosphate (HMP-PP) to form thiamine monophosphate (TMP). The sequence is that of Thiamine-phosphate synthase from Staphylococcus aureus (strain bovine RF122 / ET3-1).